We begin with the raw amino-acid sequence, 89 residues long: Putative defensin-like protein 230 (89 aa).

Positions 1-26 (MRSVIWFIVSYTLMLLVLRGGKEVEA) are cleaved as a signal peptide. 4 cysteine pairs are disulfide-bonded: Cys-30/Cys-84, Cys-40/Cys-65, Cys-48/Cys-78, and Cys-63/Cys-80.

The protein belongs to the DEFL family.

It is found in the secreted. This is Putative defensin-like protein 230 (SCRL24) from Arabidopsis thaliana (Mouse-ear cress).